A 216-amino-acid polypeptide reads, in one-letter code: MEKFTVHTGVVAPLDRENVDTDAIIPKQFLKSIKRTGFGPNAFDEWRYLDHGEPGQDNSKRPLNPDFVLNQPRYQGASVLLARKNFGCGSSREHAPWALQQYGFRAIIAPSFADIFFNNCYKNGLLPIVLTEQQVDHLFNDTYAFNGYQLTVDLDAQVVRTGDGREYPFEIAAFRKYCLLNGFDDIGLTLRHADKIRQFEAERLAKQPWLNNKLVG.

Belongs to the LeuD family. LeuD type 1 subfamily. In terms of assembly, heterodimer of LeuC and LeuD.

It carries out the reaction (2R,3S)-3-isopropylmalate = (2S)-2-isopropylmalate. Its pathway is amino-acid biosynthesis; L-leucine biosynthesis; L-leucine from 3-methyl-2-oxobutanoate: step 2/4. In terms of biological role, catalyzes the isomerization between 2-isopropylmalate and 3-isopropylmalate, via the formation of 2-isopropylmaleate. In Burkholderia ambifaria (strain MC40-6), this protein is 3-isopropylmalate dehydratase small subunit.